We begin with the raw amino-acid sequence, 457 residues long: Argininosuccinate lyase (457 aa).

The protein belongs to the lyase 1 family. Argininosuccinate lyase subfamily.

Its subcellular location is the cytoplasm. The enzyme catalyses 2-(N(omega)-L-arginino)succinate = fumarate + L-arginine. The protein operates within amino-acid biosynthesis; L-arginine biosynthesis; L-arginine from L-ornithine and carbamoyl phosphate: step 3/3. The protein is Argininosuccinate lyase of Klebsiella pneumoniae (strain 342).